A 574-amino-acid polypeptide reads, in one-letter code: Peptidyl-prolyl cis-trans isomerase FKBP9 (574 aa).

The N-terminal stretch at 1 to 26 is a signal peptide; sequence MAIRARSWRPPPPPLLLLLLWVTGQA. 4 PPIase FKBP-type domains span residues 58–146, 170–258, 282–369, and 393–481; these read GDFV…MDIW, SDFV…LDLH, GDFL…IDFH, and GDYL…LELV. N-linked (GlcNAc...) asparagine glycans are attached at residues asparagine 178, asparagine 290, asparagine 306, and asparagine 401. EF-hand domains follow at residues 492 to 527 and 537 to 572; these read WNGEVSANLFEEIDKDGDGEVLLEEFSEYIHAQVAS and DAEMIVKNMFTNQDRNGDGKVTAEEFKLKDQETKHD. Positions 505, 507, 509, 511, 516, 550, 552, 554, 556, and 561 each coordinate Ca(2+). The Prevents secretion from ER motif lies at 571–574; sequence HDEL.

Phosphorylated.

It localises to the endoplasmic reticulum. The catalysed reaction is [protein]-peptidylproline (omega=180) = [protein]-peptidylproline (omega=0). Its activity is regulated as follows. Inhibited by FK506. Its function is as follows. PPIases accelerate the folding of proteins during protein synthesis. This chain is Peptidyl-prolyl cis-trans isomerase FKBP9 (FKBP9), found in Bos taurus (Bovine).